The chain runs to 310 residues: MDSAAAAAAKRVQIEKAHNFMRQYRDPESRELKKLSANQFMDVWAHYDKDGNGYIEGTELDGFLREFVSSANATDISPEAVTDTMLEELKSCFMEAYDDNQDGKIDIRELAQLLPMEENFLLLFRFDNPLESSVEFMKIWREYDTDNSGYIEADELKNFLRDLLKEAKKINDVSEDKLIEYTDTMLQVFDANKDGRLQLSEMAKLLPVKENFLCRQVFKGATKLTKEDIEKVFSLYDRDNSGTIENEELKGFLKDLLELVKKDDYDAQDLAAFEETIMRGVGTDKHGKISRKELTMILLTLAKISPDDEE.

EF-hand domains follow at residues 35–70 (LSAN…FVSS), 84–120 (TMLE…EENF), 131–166 (ESSV…LLKE), 177–212 (KLIE…KENF), 224–259 (LTKE…LLEL), and 283–304 (TDKH…LAKI). Aspartate 48, aspartate 50, asparagine 52, tyrosine 54, glutamate 59, aspartate 98, asparagine 100, aspartate 102, lysine 104, glutamate 109, aspartate 144, aspartate 146, serine 148, tyrosine 150, glutamate 155, aspartate 190, asparagine 192, aspartate 194, arginine 196, glutamate 201, aspartate 237, aspartate 239, serine 241, threonine 243, and glutamate 248 together coordinate Ca(2+).

Belongs to the calbindin family. In terms of tissue distribution, expressed in a large number of neuron of the brain and the thoracic ganglion as well as in two small muscles of the thorax.

The sequence is that of Calbindin-32 (Cbp53E) from Drosophila melanogaster (Fruit fly).